Reading from the N-terminus, the 146-residue chain is Large ribosomal subunit protein uL15 (146 aa).

Basic and acidic residues predominate over residues 1–13 (MKLNELKPNEGSR). The segment at 1 to 54 (MKLNELKPNEGSRRNRKRVGRGTSSGYGKTAGRGQKGQLARTGGKTRLGFEGGQ) is disordered. Residues 23–35 (TSSGYGKTAGRGQ) are compositionally biased toward gly residues.

This sequence belongs to the universal ribosomal protein uL15 family. In terms of assembly, part of the 50S ribosomal subunit.

In terms of biological role, binds to the 23S rRNA. The polypeptide is Large ribosomal subunit protein uL15 (Lactobacillus johnsonii (strain CNCM I-12250 / La1 / NCC 533)).